The sequence spans 314 residues: Solute carrier family 25 member 33 (314 aa).

Solcar repeat units lie at residues 4–111, 119–206, and 224–308; these read KDTL…SKET, NSGV…LKKY, and SDFL…IVHL. Helical transmembrane passes span 7–27, 44–58, 114–134, 183–203, 226–246, and 291–311; these read LLHL…TCPL, VFQV…AGVI, GIFV…AAFI, LTAS…YETL, FLGL…IAYP, and QIPN…LLAE.

Belongs to the mitochondrial carrier (TC 2.A.29) family.

The protein localises to the mitochondrion inner membrane. Its function is as follows. Mitochondrial transporter that imports/exports pyrimidine nucleotides into and from mitochondria which participates in dendritic cell endocytosis. The protein is Solute carrier family 25 member 33 (slc25a33) of Danio rerio (Zebrafish).